Consider the following 828-residue polypeptide: Leucine--tRNA ligase (828 aa).

Positions 42 to 52 (PYPSGTLHVGH) match the 'HIGH' region motif. The 'KMSKS' region signature appears at 582–586 (KMSKS). Residue Lys-585 coordinates ATP.

Belongs to the class-I aminoacyl-tRNA synthetase family.

The protein localises to the cytoplasm. It catalyses the reaction tRNA(Leu) + L-leucine + ATP = L-leucyl-tRNA(Leu) + AMP + diphosphate. The protein is Leucine--tRNA ligase of Petrotoga mobilis (strain DSM 10674 / SJ95).